Consider the following 527-residue polypeptide: MNEELNSWDKFCNYLWFDKKLNIWLDISKIIFTNDDIVTLEEKFTDVLSSIKELENGAISNIDENRQVGHYWLRNPSISPSSNIGEEISADINEISEFGKQILNGNIKNKNNQKYTDVLWIGIGGSGLGPLLITESLQKCSKGLNFSYIDNVDPFLISEKLEELAEKLSTTLFVVVSKSGGTPEPRIAMEIIKSHCENNSLEWNSNAIAITMKDSKLFNKAISENWLKIFNLQDWVGGRTSITSSVGLLPLALINENIFEFIRGASLMDEATRTSDFKNNPAALLSSAWYLTGDGVGKRDMVVLPYRDRLQVFSKYLQQLVMESLGKKFNRNGEVVNQGISVFGNKGSTDQHAYVQQLRDGIDNFFCIFIELLDSPSTNIFDGKENPKEYLSGFLQGTRSALSSENRQSITITLEKLNCFSLGALIALFERSVSFYAELVNINAYDQPGVEAGKKAAANIIDYQQKVSNLLEKGGEYSINEITSLIDNSVSEPIFFILREMCFGNEDYLVKGDWSNPNSLVIQKRNS.

E323 functions as the Proton donor in the catalytic mechanism. Catalysis depends on residues H352 and K454.

The protein belongs to the GPI family.

The protein resides in the cytoplasm. It carries out the reaction alpha-D-glucose 6-phosphate = beta-D-fructose 6-phosphate. It functions in the pathway carbohydrate biosynthesis; gluconeogenesis. Its pathway is carbohydrate degradation; glycolysis; D-glyceraldehyde 3-phosphate and glycerone phosphate from D-glucose: step 2/4. Functionally, catalyzes the reversible isomerization of glucose-6-phosphate to fructose-6-phosphate. In Prochlorococcus marinus (strain MIT 9312), this protein is Glucose-6-phosphate isomerase.